The following is a 210-amino-acid chain: Uridine kinase (210 aa).

14–21 is an ATP binding site; it reads GGSGSGKT.

This sequence belongs to the uridine kinase family.

Its subcellular location is the cytoplasm. It carries out the reaction uridine + ATP = UMP + ADP + H(+). The enzyme catalyses cytidine + ATP = CMP + ADP + H(+). The protein operates within pyrimidine metabolism; CTP biosynthesis via salvage pathway; CTP from cytidine: step 1/3. It functions in the pathway pyrimidine metabolism; UMP biosynthesis via salvage pathway; UMP from uridine: step 1/1. The polypeptide is Uridine kinase (Deinococcus radiodurans (strain ATCC 13939 / DSM 20539 / JCM 16871 / CCUG 27074 / LMG 4051 / NBRC 15346 / NCIMB 9279 / VKM B-1422 / R1)).